We begin with the raw amino-acid sequence, 838 residues long: MPQRHHQGHKRTPKQLALIIKRCLPMVLTGSGMLCTTANAEEYYFDPIMLETTKSGMQTTDLSRFSKKYAQLPGTYQVDIWLNKKKVSQKKITFTANAEQLLQPQFTVEQLRELGIKVDEIPALAEKDDDSVINSLEQIIPGTAAEFDFNHQQLNLSIPQIALYRDARGYVSPSRWDDGIPTLFTNYSFTGSDNRYRQGNRSQRQYLNMQNGANFGPWRLRNYSTWTRNDQTSSWNTISSYLQRDIKALKSQLLLGESATSGSIFSSYTFTGVQLASDDNMLPNSQRGFAPTVRGIANSSAIVTIRQNGYVIYQSNVSAGAFEINDLYPSSNSGDLEVTIEESDGTQRRFIQPYSSLPMMQRPGHLKYSATAGRYRADANSDSKEPEFAEATAIYGLNNTFTLYGGLLGSEDYYALGIGIGGTLGALGALSMDINRADTQFDNQHSFHGYQWRTQYIKDIPETNTNIAVSYYRYTNDGYFSFNEANTRNWDYNSRQKSEIQFNISQTIFDGVSLYASGSQQDYWGNNDKNRNISVGVSGQQWGVGYSLNYQYSRYTDQNNDRALSLNLSIPLERWLPRSRVSYQMTSQKDRPTQHEMRLDGSLLDDGRLSYSLEQSLDDDNNHNSSLNASYRSPYGTFSAGYSYGNDSSQYNYGVTGGVVIHPHGVTLSQYLGNAFALIDANGASGVRIQNYPGIATDPFGYAVVPYLTTYQENRLSVDTTQLPDNVDLEQTTQFVVPNRGAMVAARFNANIGYRVLVTVSDRNGKPLPFGALASNDDTGQQSIVDEGGILYLSGISSKSQSWTVRWGNQADQQCQFAFSTPDSEPTTSVLQGTAQCH.

A signal peptide spans 1 to 40 (MPQRHHQGHKRTPKQLALIIKRCLPMVLTGSGMLCTTANA). Residues Cys-815 and Cys-837 are joined by a disulfide bond.

This sequence belongs to the fimbrial export usher family.

Its subcellular location is the cell outer membrane. Part of the yraHIJK fimbrial operon. Could contribute to adhesion to various surfaces in specific environmental niches. Increases adhesion to eukaryotic T24 bladder epithelial cells in the absence of fim operon. Probably involved in the export and assembly of fimbrial subunits across the outer membrane. The polypeptide is Outer membrane usher protein YraJ (yraJ) (Escherichia coli (strain K12)).